A 22-amino-acid polypeptide reads, in one-letter code: Brevinin-1OKa (22 aa).

Lys22 is modified (lysine amide).

Expressed by the skin glands.

The protein localises to the secreted. Functionally, antimicrobial peptide. Active against Gram-negative bacterium E.coli (MIC=12.5 uM) and against Gram-positive bacterium S.aureus (MIC=12.5 uM). This chain is Brevinin-1OKa, found in Nidirana okinavana (Kampira Falls frog).